Here is a 188-residue protein sequence, read N- to C-terminus: dCTP deaminase (188 aa).

Residues 111 to 116 (KSTYAR), 135 to 137 (TLE), glutamine 156, tyrosine 170, and glutamine 180 each bind dCTP. Residue glutamate 137 is the Proton donor/acceptor of the active site.

This sequence belongs to the dCTP deaminase family. As to quaternary structure, homotrimer.

It carries out the reaction dCTP + H2O + H(+) = dUTP + NH4(+). Its pathway is pyrimidine metabolism; dUMP biosynthesis; dUMP from dCTP (dUTP route): step 1/2. Its function is as follows. Catalyzes the deamination of dCTP to dUTP. The polypeptide is dCTP deaminase (Ralstonia pickettii (strain 12J)).